The primary structure comprises 838 residues: Protein P (838 aa).

Residues 1–179 (MPLSYQHFRK…FCGSPYSWEQ (179 aa)) are terminal protein domain (TP). The segment at 180–341 (ELQHSQRHGD…YCLSHLVNLL (162 aa)) is spacer. A disordered region spans residues 218-242 (LGLQPHQGPLATSQPGRSGSIRPRA). The tract at residues 342-685 (EDWGPCVEHG…YLNLYPVARQ (344 aa)) is polymerase/reverse transcriptase domain (RT). Residues 352-595 (EHHIRIPRTP…YSLNFMGYVI (244 aa)) enclose the Reverse transcriptase domain. The Mg(2+) site is built by Asp424, Asp546, and Asp547.

The protein belongs to the hepadnaviridae P protein family.

The catalysed reaction is DNA(n) + a 2'-deoxyribonucleoside 5'-triphosphate = DNA(n+1) + diphosphate. The enzyme catalyses Endonucleolytic cleavage to 5'-phosphomonoester.. With respect to regulation, activated by host HSP70 and HSP40 in vitro to be able to bind the epsilon loop of the pgRNA. Because deletion of the RNase H region renders the protein partly chaperone-independent, the chaperones may be needed indirectly to relieve occlusion of the RNA-binding site by this domain. Inhibited by several reverse-transcriptase inhibitors: Lamivudine, Adefovir and Entecavir. Functionally, multifunctional enzyme that converts the viral RNA genome into dsDNA in viral cytoplasmic capsids. This enzyme displays a DNA polymerase activity that can copy either DNA or RNA templates, and a ribonuclease H (RNase H) activity that cleaves the RNA strand of RNA-DNA heteroduplexes in a partially processive 3'- to 5'-endonucleasic mode. Neo-synthesized pregenomic RNA (pgRNA) are encapsidated together with the P protein, and reverse-transcribed inside the nucleocapsid. Initiation of reverse-transcription occurs first by binding the epsilon loop on the pgRNA genome, and is initiated by protein priming, thereby the 5'-end of (-)DNA is covalently linked to P protein. Partial (+)DNA is synthesized from the (-)DNA template and generates the relaxed circular DNA (RC-DNA) genome. After budding and infection, the RC-DNA migrates in the nucleus, and is converted into a plasmid-like covalently closed circular DNA (cccDNA). The activity of P protein does not seem to be necessary for cccDNA generation, and is presumably released from (+)DNA by host nuclear DNA repair machinery. The chain is Protein P from Homo sapiens (Human).